Reading from the N-terminus, the 421-residue chain is 5-hydroxytryptamine receptor 1A (421 aa).

Over methionine 1–isoleucine 38 the chain is Extracellular. N-linked (GlcNAc...) asparagine glycans are attached at residues asparagine 10, asparagine 11, asparagine 24, and asparagine 30. Residues threonine 39 to alanine 59 form a helical membrane-spanning segment. Residues alanine 60 to tyrosine 73 are Cytoplasmic-facing. The chain crosses the membrane as a helical span at residues leucine 74–valine 98. The Extracellular segment spans residues leucine 99–valine 107. The helical transmembrane segment at threonine 108–leucine 132 threads the bilayer. Cysteines 109 and 187 form a disulfide. Serotonin contacts are provided by aspartate 116 and cysteine 120. Positions aspartate 133 to tyrosine 135 match the DRY motif; important for ligand-induced conformation changes motif. Topologically, residues aspartate 133–arginine 152 are cytoplasmic. A helical membrane pass occupies residues alanine 153 to glycine 174. The Extracellular segment spans residues tryptophan 175 to histidine 193. Residues glycine 194–glycine 216 form a helical membrane-spanning segment. Residues arginine 217–threonine 346 lie on the Cytoplasmic side of the membrane. A disordered region spans residues glycine 237–glutamate 268. Positions 314, 345, 346, and 352 each coordinate 1D-myo-inositol 4-phosphate. A helical membrane pass occupies residues leucine 347–phenylalanine 370. Over cysteine 371–proline 378 the chain is Extracellular. Residues glutamate 379–phenylalanine 403 form a helical membrane-spanning segment. Residues asparagine 396 to tyrosine 400 carry the NPxxY motif; important for ligand-induced conformation changes and signaling motif. Phenylalanine 403, asparagine 404, and lysine 405 together coordinate 1D-myo-inositol 4-phosphate. Over asparagine 404 to arginine 421 the chain is Cytoplasmic.

The protein belongs to the G-protein coupled receptor 1 family. 5-hydroxytryptamine receptor subfamily. HTR1A sub-subfamily. As to quaternary structure, heterodimer; heterodimerizes with GPER1. Interacts with YIF1B. Interacts with GPR39 and GALR1. As to expression, most abundantly expressed in midbrain, in dorsal raphe and hippocampus. Detected at lower levels in amygdala and brain cortex.

It localises to the cell membrane. It is found in the cell projection. The protein resides in the dendrite. G-protein coupled receptor activity is regulated by lipids: phosphatidylinositol 4-phosphate increases HTR1A-mediated activity. Plays a role in the regulation of dopamine and 5-hydroxytryptamine levels in the brain, and thereby affects neural activity, mood and behavior. Plays a role in the response to anxiogenic stimuli. G-protein coupled receptor for 5-hydroxytryptamine (serotonin). Also functions as a receptor for various drugs and psychoactive substances. Ligand binding causes a conformation change that triggers signaling via guanine nucleotide-binding proteins (G proteins) and modulates the activity of downstream effectors, such as adenylate cyclase. HTR1A is coupled to G(i)/G(o) G alpha proteins and mediates inhibitory neurotransmission: signaling inhibits adenylate cyclase activity and activates a phosphatidylinositol-calcium second messenger system that regulates the release of Ca(2+) ions from intracellular stores. Beta-arrestin family members regulate signaling by mediating both receptor desensitization and resensitization processes. In Mus musculus (Mouse), this protein is 5-hydroxytryptamine receptor 1A (Htr1a).